We begin with the raw amino-acid sequence, 306 residues long: Agmatinase (306 aa).

Positions 126, 149, 151, 153, 230, and 232 each coordinate Mn(2+).

This sequence belongs to the arginase family. Agmatinase subfamily. The cofactor is Mn(2+).

It carries out the reaction agmatine + H2O = urea + putrescine. It functions in the pathway amine and polyamine biosynthesis; putrescine biosynthesis via agmatine pathway; putrescine from agmatine: step 1/1. In terms of biological role, catalyzes the formation of putrescine from agmatine. The sequence is that of Agmatinase from Serratia proteamaculans (strain 568).